Here is a 280-residue protein sequence, read N- to C-terminus: Ribosomal RNA-processing protein 7 homolog A (280 aa).

Positions 59 to 159 (RTLFVLNVPP…SGIHKWISDY (101 aa)) constitute an RRM domain. A Phosphoserine modification is found at Ser99.

This sequence belongs to the RRP7 family. Part of the small subunit (SSU) processome, composed of more than 70 proteins and the RNA chaperone small nucleolar RNA (snoRNA) U3. Interacts with NOL6; required for NOL6 localization to nucleolus. Expressed in the apical radial glial cells in the developing brain.

Its subcellular location is the nucleus. The protein localises to the nucleolus. It localises to the cell projection. It is found in the cilium. The protein resides in the cytoplasm. Its subcellular location is the cytoskeleton. The protein localises to the microtubule organizing center. It localises to the centrosome. Nucleolar protein that is involved in ribosomal RNA (rRNA) processing. Also plays a role in primary cilia resorption, and cell cycle progression in neurogenesis and neocortex development. Part of the small subunit (SSU) processome, first precursor of the small eukaryotic ribosomal subunit. During the assembly of the SSU processome in the nucleolus, many ribosome biogenesis factors, an RNA chaperone and ribosomal proteins associate with the nascent pre-rRNA and work in concert to generate RNA folding, modifications, rearrangements and cleavage as well as targeted degradation of pre-ribosomal RNA by the RNA exosome. This chain is Ribosomal RNA-processing protein 7 homolog A, found in Homo sapiens (Human).